A 113-amino-acid polypeptide reads, in one-letter code: Hydrogenase maturation factor HypA (113 aa).

His2 serves as a coordination point for Ni(2+). Zn(2+) is bound by residues Cys73, Cys76, Cys89, and Cys92.

The protein belongs to the HypA/HybF family.

Involved in the maturation of [NiFe] hydrogenases. Required for nickel insertion into the metal center of the hydrogenase. The sequence is that of Hydrogenase maturation factor HypA from Rhodopseudomonas palustris (strain BisA53).